We begin with the raw amino-acid sequence, 822 residues long: Coiled-coil domain-containing protein 175 (822 aa).

3 coiled-coil regions span residues 129-164 (IIEI…EVLG), 223-397 (IEKQ…KQMM), and 510-537 (HLIE…IEEL).

In Mus musculus (Mouse), this protein is Coiled-coil domain-containing protein 175 (Ccdc175).